The following is a 359-amino-acid chain: Endoglucanase 1 (359 aa).

2 disordered regions span residues 1-26 and 47-72; these read MENP…RGGR and TGAS…DAGT. Positions 13 to 24 are enriched in basic residues; that stretch reads LRRRRSERRARG. Low complexity predominate over residues 60-72; the sequence is APSADSGTADAGT. Asp-154 is an active-site residue. Cys-155 and Cys-199 are disulfide-bonded. Asp-192 functions as the Proton donor in the catalytic mechanism. Catalysis depends on Asp-339, which acts as the Nucleophile.

It belongs to the glycosyl hydrolase 6 (cellulase B) family.

The enzyme catalyses Endohydrolysis of (1-&gt;4)-beta-D-glucosidic linkages in cellulose, lichenin and cereal beta-D-glucans.. CMCase I preferentially hydrolyzes carboxymethyl cellulose (CMC). This is Endoglucanase 1 (casA) from Streptomyces sp. (strain KSM-9).